Reading from the N-terminus, the 335-residue chain is Beta-ketoacyl-[acyl-carrier-protein] synthase III (335 aa).

Active-site residues include Cys120 and His261. Residues 262–266 (QANER) are ACP-binding. Asn291 is a catalytic residue.

The protein belongs to the thiolase-like superfamily. FabH family. As to quaternary structure, homodimer.

The protein resides in the cytoplasm. The catalysed reaction is malonyl-[ACP] + acetyl-CoA + H(+) = 3-oxobutanoyl-[ACP] + CO2 + CoA. It participates in lipid metabolism; fatty acid biosynthesis. Catalyzes the condensation reaction of fatty acid synthesis by the addition to an acyl acceptor of two carbons from malonyl-ACP. Catalyzes the first condensation reaction which initiates fatty acid synthesis and may therefore play a role in governing the total rate of fatty acid production. Possesses both acetoacetyl-ACP synthase and acetyl transacylase activities. Its substrate specificity determines the biosynthesis of branched-chain and/or straight-chain of fatty acids. The chain is Beta-ketoacyl-[acyl-carrier-protein] synthase III from Chlamydia pneumoniae (Chlamydophila pneumoniae).